The following is a 193-amino-acid chain: Guanylate kinase (193 aa).

The region spanning 8–188 (GRLVVLVGPS…ACEQLVSLFV (181 aa)) is the Guanylate kinase-like domain. 15 to 22 (GPSAVGKS) contacts ATP.

Belongs to the guanylate kinase family.

The protein localises to the cytoplasm. It catalyses the reaction GMP + ATP = GDP + ADP. Essential for recycling GMP and indirectly, cGMP. The polypeptide is Guanylate kinase (Nocardia farcinica (strain IFM 10152)).